The following is a 405-amino-acid chain: Acetylornithine/succinyldiaminopimelate aminotransferase (405 aa).

Pyridoxal 5'-phosphate contacts are provided by residues 108-109 (GT) and Phe-141. Arg-144 lines the N(2)-acetyl-L-ornithine pocket. Position 226 to 229 (226 to 229 (DEVQ)) interacts with pyridoxal 5'-phosphate. At Lys-255 the chain carries N6-(pyridoxal phosphate)lysine. Ser-283 contacts N(2)-acetyl-L-ornithine. Pyridoxal 5'-phosphate is bound at residue Thr-284.

The protein belongs to the class-III pyridoxal-phosphate-dependent aminotransferase family. ArgD subfamily. As to quaternary structure, homodimer. The cofactor is pyridoxal 5'-phosphate.

The protein localises to the cytoplasm. It catalyses the reaction N(2)-acetyl-L-ornithine + 2-oxoglutarate = N-acetyl-L-glutamate 5-semialdehyde + L-glutamate. The enzyme catalyses N-succinyl-(2S,6S)-2,6-diaminopimelate + 2-oxoglutarate = (S)-2-succinylamino-6-oxoheptanedioate + L-glutamate. It functions in the pathway amino-acid biosynthesis; L-arginine biosynthesis; N(2)-acetyl-L-ornithine from L-glutamate: step 4/4. It participates in amino-acid biosynthesis; L-lysine biosynthesis via DAP pathway; LL-2,6-diaminopimelate from (S)-tetrahydrodipicolinate (succinylase route): step 2/3. With respect to regulation, inhibited by gabaculine (Gcn). In terms of biological role, involved in both the arginine and lysine biosynthetic pathways. This chain is Acetylornithine/succinyldiaminopimelate aminotransferase, found in Salmonella typhimurium (strain LT2 / SGSC1412 / ATCC 700720).